The chain runs to 325 residues: Aspartate carbamoyltransferase catalytic subunit (325 aa).

The carbamoyl phosphate site is built by Arg-64 and Thr-65. L-aspartate is bound at residue Lys-92. Residues Arg-114, His-142, and Gln-145 each contribute to the carbamoyl phosphate site. L-aspartate-binding residues include Arg-176 and Arg-230. Residues Gly-271 and Pro-272 each contribute to the carbamoyl phosphate site.

Belongs to the aspartate/ornithine carbamoyltransferase superfamily. ATCase family. In terms of assembly, heterododecamer (2C3:3R2) of six catalytic PyrB chains organized as two trimers (C3), and six regulatory PyrI chains organized as three dimers (R2).

The catalysed reaction is carbamoyl phosphate + L-aspartate = N-carbamoyl-L-aspartate + phosphate + H(+). Its pathway is pyrimidine metabolism; UMP biosynthesis via de novo pathway; (S)-dihydroorotate from bicarbonate: step 2/3. Functionally, catalyzes the condensation of carbamoyl phosphate and aspartate to form carbamoyl aspartate and inorganic phosphate, the committed step in the de novo pyrimidine nucleotide biosynthesis pathway. The sequence is that of Aspartate carbamoyltransferase catalytic subunit from Nitratidesulfovibrio vulgaris (strain DSM 19637 / Miyazaki F) (Desulfovibrio vulgaris).